Consider the following 307-residue polypeptide: Ribosomal protein L11 methyltransferase (307 aa).

S-adenosyl-L-methionine contacts are provided by Thr-162, Gly-183, Asp-205, and Asn-244.

The protein belongs to the methyltransferase superfamily. PrmA family.

It localises to the cytoplasm. It catalyses the reaction L-lysyl-[protein] + 3 S-adenosyl-L-methionine = N(6),N(6),N(6)-trimethyl-L-lysyl-[protein] + 3 S-adenosyl-L-homocysteine + 3 H(+). Methylates ribosomal protein L11. The sequence is that of Ribosomal protein L11 methyltransferase from Bordetella bronchiseptica (strain ATCC BAA-588 / NCTC 13252 / RB50) (Alcaligenes bronchisepticus).